A 285-amino-acid polypeptide reads, in one-letter code: V-set and transmembrane domain-containing protein 2B (285 aa).

An N-terminal signal peptide occupies residues 1 to 28 (MEQRNRLGALGYLLPLLLHSLLLFVADA). The Ig-like V-type domain occupies 29–143 (TFTEVPKDVT…DDDTQEHKAQ (115 aa)). At 29 to 263 (TFTEVPKDVT…HGSGTGPGYS (235 aa)) the chain is on the extracellular side. A disulfide bond links Cys-49 and Cys-127. Positions 160 to 225 (AEAVSHIQSS…AAAAAASATH (66 aa)) are disordered. Composition is skewed to low complexity over residues 176–189 (ASSAVSSNNAGAAV) and 208–225 (PAGSGVPEAAAAAASATH). The chain crosses the membrane as a helical span at residues 264–284 (ADPLLSLLLLALHKFLHPLLG). A topological domain (cytoplasmic) is located at residue His-285.

It localises to the membrane. This chain is V-set and transmembrane domain-containing protein 2B (Vstm2b), found in Mus musculus (Mouse).